The sequence spans 315 residues: Triosephosphate isomerase, chloroplastic (315 aa).

Residues 1-60 (MAATSLTAPPSFSGLRRISPKLDAAAVSSHQSFFHRVNSSTRLVSSSSSSHRSPRGVVAM) constitute a chloroplast transit peptide. 2 residues coordinate substrate: asparagine 71 and lysine 73. Histidine 155 functions as the Electrophile in the catalytic mechanism. Residue serine 178 is modified to Phosphoserine. The active-site Proton acceptor is the glutamate 225.

The protein belongs to the triosephosphate isomerase family. Homodimer.

Its subcellular location is the plastid. It localises to the chloroplast. The catalysed reaction is D-glyceraldehyde 3-phosphate = dihydroxyacetone phosphate. It functions in the pathway carbohydrate biosynthesis; Calvin cycle. The chain is Triosephosphate isomerase, chloroplastic (TIM) from Arabidopsis thaliana (Mouse-ear cress).